Reading from the N-terminus, the 263-residue chain is Acetylglutamate kinase (263 aa).

Substrate-binding positions include 48–49 (GG), arginine 70, and asparagine 162.

This sequence belongs to the acetylglutamate kinase family. ArgB subfamily.

It is found in the cytoplasm. The catalysed reaction is N-acetyl-L-glutamate + ATP = N-acetyl-L-glutamyl 5-phosphate + ADP. The protein operates within amino-acid biosynthesis; L-arginine biosynthesis; N(2)-acetyl-L-ornithine from L-glutamate: step 2/4. Catalyzes the ATP-dependent phosphorylation of N-acetyl-L-glutamate. This chain is Acetylglutamate kinase, found in Vibrio vulnificus (strain CMCP6).